Here is a 772-residue protein sequence, read N- to C-terminus: Ribosomal protein S6 kinase alpha-4 (772 aa).

Residues 33 to 301 (FELLKVLGTG…AQEVRNHPFF (269 aa)) enclose the Protein kinase 1 domain. ATP-binding positions include 39 to 47 (LGTGAYGKV) and lysine 65. Residue aspartate 161 is the Proton acceptor of the active site. The residue at position 196 (serine 196) is a Phosphoserine; by autocatalysis. The 70-residue stretch at 302–371 (QGLDWVALAA…VAPSILFDHN (70 aa)) folds into the AGC-kinase C-terminal domain. Serine 343 is subject to Phosphoserine; by MAPK1, MAPK3 and MAPK14. Residue serine 347 is modified to Phosphoserine. Phosphoserine; by autocatalysis occurs at positions 360 and 365. Positions 411–674 (DLREPALGQG…LEGLRGSSWL (264 aa)) constitute a Protein kinase 2 domain. ATP contacts are provided by residues 417 to 425 (LGQGSFSVC) and lysine 440. The active-site Proton acceptor is aspartate 530. Residue threonine 542 is modified to Phosphothreonine. Phosphothreonine; by MAPK1, MAPK3 and MAPK14 is present on threonine 568. Phosphoserine is present on residues serine 634 and serine 678. Disordered stretches follow at residues 673–696 (WLQD…SSGP) and 728–772 (AKRR…LPPS). Threonine 687 is modified (phosphothreonine). The tract at residues 725-772 (APLAKRRKQKLRSATASRRGSPAPANPGRAPVASKGAPRRANGPLPPS) is required for nuclear targeting and association with MAPK14. Position 737 is a phosphoserine; by autocatalysis (serine 737). Serine 745 bears the Phosphoserine mark.

This sequence belongs to the protein kinase superfamily. AGC Ser/Thr protein kinase family. S6 kinase subfamily. Forms a complex with either MAPK1/ERK2 or MAPK3/ERK1 in quiescent cells which transiently dissociates following mitogenic stimulation. Also associates with MAPK14/p38-alpha. Activated RPS6KA4 associates with and phosphorylates the NF-kappa-B p65 subunit RELA. Mg(2+) serves as cofactor. Post-translationally, ser-343 and Thr-568 phosphorylation is required for kinase activity. Ser-343 and Ser-196 are autophosphorylated by the C-terminal kinase domain, and their phosphorylation is essential for the catalytic activity of the N-terminal kinase domain. Phosphorylated at Ser-343, Thr-568 and Thr-687 by MAPK1/ERK2, MAPK3/ERK1 and MAPK14/p38-alpha. Autophosphorylated at Ser-737 and Ser-745 by the N-terminal kinase domain.

It is found in the nucleus. The catalysed reaction is L-seryl-[protein] + ATP = O-phospho-L-seryl-[protein] + ADP + H(+). It carries out the reaction L-threonyl-[protein] + ATP = O-phospho-L-threonyl-[protein] + ADP + H(+). Its activity is regulated as follows. Activated by phosphorylation at Ser-343, Thr-568 and Thr-687 by MAPK1/ERK2, MAPK3/ERK1 and MAPK14/p38-alpha, and by further autophosphorylation of Ser-196, Ser-360 and Ser-365 by the activated C-terminal kinase domain. In terms of biological role, serine/threonine-protein kinase that is required for the mitogen or stress-induced phosphorylation of the transcription factors CREB1 and ATF1 and for the regulation of the transcription factor RELA, and that contributes to gene activation by histone phosphorylation and functions in the regulation of inflammatory genes. Phosphorylates CREB1 and ATF1 in response to mitogenic or stress stimuli such as UV-C irradiation, epidermal growth factor (EGF) and anisomycin. Plays an essential role in the control of RELA transcriptional activity in response to TNF. Phosphorylates 'Ser-10' of histone H3 in response to mitogenics, stress stimuli and EGF, which results in the transcriptional activation of several immediate early genes, including proto-oncogenes c-fos/FOS and c-jun/JUN. May also phosphorylate 'Ser-28' of histone H3. Mediates the mitogen- and stress-induced phosphorylation of high mobility group protein 1 (HMGN1/HMG14). In lipopolysaccharide-stimulated primary macrophages, acts downstream of the Toll-like receptor TLR4 to limit the production of pro-inflammatory cytokines. Functions probably by inducing transcription of the MAP kinase phosphatase DUSP1 and the anti-inflammatory cytokine interleukin 10 (IL10), via CREB1 and ATF1 transcription factors. In Homo sapiens (Human), this protein is Ribosomal protein S6 kinase alpha-4 (RPS6KA4).